Consider the following 385-residue polypeptide: Acetylornithine aminotransferase (385 aa).

Residues 94 to 95 (GT) and Phe-126 each bind pyridoxal 5'-phosphate. N(2)-acetyl-L-ornithine is bound at residue Arg-129. 211–214 (DEVQ) contacts pyridoxal 5'-phosphate. Lys-240 carries the N6-(pyridoxal phosphate)lysine modification. Residue Thr-267 coordinates N(2)-acetyl-L-ornithine. Position 268 (Thr-268) interacts with pyridoxal 5'-phosphate.

The protein belongs to the class-III pyridoxal-phosphate-dependent aminotransferase family. ArgD subfamily. As to quaternary structure, homodimer. Pyridoxal 5'-phosphate serves as cofactor.

The protein localises to the cytoplasm. It catalyses the reaction N(2)-acetyl-L-ornithine + 2-oxoglutarate = N-acetyl-L-glutamate 5-semialdehyde + L-glutamate. It functions in the pathway amino-acid biosynthesis; L-arginine biosynthesis; N(2)-acetyl-L-ornithine from L-glutamate: step 4/4. The protein is Acetylornithine aminotransferase of Thermotoga maritima (strain ATCC 43589 / DSM 3109 / JCM 10099 / NBRC 100826 / MSB8).